The primary structure comprises 95 residues: Small ribosomal subunit protein uS19 (95 aa).

This sequence belongs to the universal ribosomal protein uS19 family.

Protein S19 forms a complex with S13 that binds strongly to the 16S ribosomal RNA. This is Small ribosomal subunit protein uS19 from Chloroflexus aggregans (strain MD-66 / DSM 9485).